Reading from the N-terminus, the 154-residue chain is Large ribosomal subunit protein uL13 (154 aa).

Belongs to the universal ribosomal protein uL13 family. In terms of assembly, part of the 50S ribosomal subunit.

Functionally, this protein is one of the early assembly proteins of the 50S ribosomal subunit, although it is not seen to bind rRNA by itself. It is important during the early stages of 50S assembly. The polypeptide is Large ribosomal subunit protein uL13 (Sinorhizobium medicae (strain WSM419) (Ensifer medicae)).